The sequence spans 68 residues: MMSKLGVLLTICLLLFPLTAVPLDGDQHADRPADRMQDISSEQHPLFDPVKRCCDWPCTIGCVPCCLP.

The first 20 residues, 1–20 (MMSKLGVLLTICLLLFPLTA), serve as a signal peptide directing secretion. Residues 21–50 (VPLDGDQHADRPADRMQDISSEQHPLFDPV) constitute a propeptide that is removed on maturation. 3 cysteine pairs are disulfide-bonded: Cys-53-Cys-66, Cys-54-Cys-62, and Cys-58-Cys-65. Pro-64 carries the post-translational modification 4-hydroxyproline.

This sequence belongs to the conotoxin M superfamily. As to expression, expressed by the venom duct.

It is found in the secreted. This is Conotoxin TsMMSK-021 from Conus tessulatus (Tessellate cone).